Consider the following 422-residue polypeptide: G-protein coupled receptor 83 (422 aa).

Residues 1–16 form the signal peptide; that stretch reads MGRRGALLCLLPLLRA. The Extracellular segment spans residues 17 to 70; it reads AERPEGRADEPGLEAALAGPNASHFFWSNYSFSDWQNFVGRRRYGAESQNPTVK. 2 N-linked (GlcNAc...) asparagine glycosylation sites follow: Asn37 and Asn45. Residues 71 to 91 form a helical membrane-spanning segment; the sequence is ALLVVAYSFIIVFSLFGNVLV. Over 92 to 106 the chain is Cytoplasmic; that stretch reads CHVIFKNQRMRSATS. The chain crosses the membrane as a helical span at residues 107–128; the sequence is LFIVNLAVADILITLLNTPFTL. At 129–144 the chain is on the extracellular side; sequence VRFVNSTWVFGKGMCH. The N-linked (GlcNAc...) asparagine glycan is linked to Asn133. Residues 145-166 form a helical membrane-spanning segment; sequence VSRFAQYCSLHVSALTLTAIAV. Residues 167 to 185 are Cytoplasmic-facing; that stretch reads DRHQVIMHPLKPRISITKG. Residues 186 to 207 form a helical membrane-spanning segment; the sequence is VIYITVIWTMATFFSLPHAICQ. Residues 208–237 are Extracellular-facing; the sequence is KLFTFKYSEDIVRSLCLPDFPEPADLFWKY. The chain crosses the membrane as a helical span at residues 238 to 259; that stretch reads LDLATFILLYILPLLIISVAYA. Over 260–292 the chain is Cytoplasmic; it reads RVAKKLWLCNTIGDVTTEQYLALRRKKKKTIKM. The helical transmembrane segment at 293–314 threads the bilayer; it reads LMLVVVLFALCWFPLNCYVLLL. At 315 to 326 the chain is on the extracellular side; the sequence is SSKVIHTNNALY. The helical transmembrane segment at 327 to 347 threads the bilayer; that stretch reads FAFHWFAMSSTCYNPFIYCWL. The Cytoplasmic segment spans residues 348-422; the sequence is NENFRIELKA…SSVEPIVAMS (75 aa).

The protein belongs to the G-protein coupled receptor 1 family.

The protein resides in the cell membrane. G-protein coupled receptor for PEN, a neuropeptide produced from the precursor protein, proSAAS (encoded by PCSK1N). Acts through a G(i)- and G(q)-alpha-alpha-mediated pathway in response to PEN. Plays a role in food intake and body weight regulation. May contribute to the regulation of anxiety-related behaviors. This is G-protein coupled receptor 83 (GPR83) from Canis lupus familiaris (Dog).